The sequence spans 431 residues: CCA-adding enzyme (431 aa).

Positions 50 and 53 each coordinate ATP. CTP is bound by residues Ser50 and Lys53. Mg(2+) is bound by residues Asp61, Asp63, and Asp112. ATP is bound by residues His135, Lys155, and Tyr164. 3 residues coordinate CTP: His135, Lys155, and Tyr164.

This sequence belongs to the tRNA nucleotidyltransferase/poly(A) polymerase family. Archaeal CCA-adding enzyme subfamily. In terms of assembly, homodimer. The cofactor is Mg(2+).

The enzyme catalyses a tRNA precursor + 2 CTP + ATP = a tRNA with a 3' CCA end + 3 diphosphate. The catalysed reaction is a tRNA with a 3' CCA end + 2 CTP + ATP = a tRNA with a 3' CCACCA end + 3 diphosphate. Catalyzes the addition and repair of the essential 3'-terminal CCA sequence in tRNAs without using a nucleic acid template. Adds these three nucleotides in the order of C, C, and A to the tRNA nucleotide-73, using CTP and ATP as substrates and producing inorganic pyrophosphate. tRNA 3'-terminal CCA addition is required both for tRNA processing and repair. Also involved in tRNA surveillance by mediating tandem CCA addition to generate a CCACCA at the 3' terminus of unstable tRNAs. While stable tRNAs receive only 3'-terminal CCA, unstable tRNAs are marked with CCACCA and rapidly degraded. The polypeptide is CCA-adding enzyme (Thermoplasma acidophilum (strain ATCC 25905 / DSM 1728 / JCM 9062 / NBRC 15155 / AMRC-C165)).